Consider the following 333-residue polypeptide: GDP-mannose transporter GONST1 (333 aa).

9 helical membrane-spanning segments follow: residues 33–55, 62–84, 99–121, 153–170, 174–196, 216–238, 253–275, 282–304, and 308–325; these read ALLS…KFVL, AGIF…LSLM, VWFP…LKYI, VWAA…GGIT, FNAV…SLTL, SMVL…FFNE, FWMV…MWFL, TYSL…LFNV, and LQNS…VVFA.

This sequence belongs to the nucleotide-sugar transporter family. GDP-Mannose:GMP antiporter (GMA) (TC 2.A.7.13) subfamily.

The protein localises to the golgi apparatus membrane. Its function is as follows. Involved in the import of GDP-mannose from the cytoplasm into the Golgi lumen. Required for the luminal synthesis of a variety of plant cell surface components. Is required for the correct mannosylation of the glycosylinositol phosphoceramides (GIPC). Can indifferently transport GDP-mannose, GDP-Glucose, GDP-Fucose or GDP-Galactose in vitro. The protein is GDP-mannose transporter GONST1 of Arabidopsis thaliana (Mouse-ear cress).